Reading from the N-terminus, the 403-residue chain is N-isopropylammelide isopropyl amidohydrolase (403 aa).

Residues histidine 60, histidine 62, and histidine 217 each coordinate Zn(2+). Residue histidine 249 is the Proton donor/acceptor of the active site. A Zn(2+)-binding site is contributed by aspartate 303.

The protein belongs to the metallo-dependent hydrolases superfamily. N-acyl-D-amino-acid deacylase family. In terms of assembly, homotetramer. Zn(2+) serves as cofactor.

It is found in the cytoplasm. The catalysed reaction is N-isopropylammelide + H2O + H(+) = isopropylamine + cyanurate. The protein operates within xenobiotic degradation; atrazine degradation; cyanurate from atrazine: step 3/3. Its activity is regulated as follows. Inhibited by N-ethylammeline, N-hydroxyethylammeline, N-isopropylammeline, ammeline and 2-amino-4hydroxy-1,3,5-s-triazine. Transforms N-isopropylammelide to cyanuric acid and isopropylamine. This is N-isopropylammelide isopropyl amidohydrolase (atzC) from Pseudomonas sp. (strain ADP).